Here is a 392-residue protein sequence, read N- to C-terminus: MRLLTVVLLLPLLIICHEHSHHHHDDEGSAVLTKVGLDDHELHEHDHDHDHDHKILRWDEKKNHSSHEKVPHSQLSTLKVWVFSLSAVIGISLAPCTLLFFIPAQHANGPFLKILLAFGAGGLLGDALLHIIPHSLNPHSHGAHDHDHAHSHDHAHNDHSHDHSDQLRVGIYVIAGILVFMMVEQLVRIIKGGHCHSHENGHIVADEHRHLNDDHHHHHNGEKKQEVEGLKDIKASAYLNLVADFVHNMTDGLAIGASFSAGSTLGWVTTLTVLLHELPHEVGDFAILVQSGFSKYQAIRMQAVTALGAITGCIFSLLISNPVLSAEGDTGAIMPFTAGGFIYIATVSVIPELLESGDHNNMSKVAKMAQSLVHLIAICMGVGMMYIVSLVE.

Asn63 carries N-linked (GlcNAc...) asparagine glycosylation. Helical transmembrane passes span 82 to 102 (VFSL…LFFI) and 114 to 134 (ILLA…IIPH). Residues 139–162 (HSHGAHDHDHAHSHDHAHNDHSHD) are disordered. Basic and acidic residues predominate over residues 142-162 (GAHDHDHAHSHDHAHNDHSHD). Residues 170–190 (GIYVIAGILVFMMVEQLVRII) traverse the membrane as a helical segment. N-linked (GlcNAc...) asparagine glycosylation is present at Asn248. The next 3 helical transmembrane spans lie at 255-275 (IGAS…TVLL), 304-324 (VTAL…NPVL), and 331-351 (GAIM…SVIP). Residue Asn361 is glycosylated (N-linked (GlcNAc...) asparagine). The helical transmembrane segment at 371 to 391 (SLVHLIAICMGVGMMYIVSLV) threads the bilayer.

It belongs to the ZIP transporter (TC 2.A.5) family. KE4/Catsup subfamily.

It localises to the membrane. In terms of biological role, zinc transporter which regulates intracellular zinc levels. Required for spermatogenesis in both hermaphrodites and males where it resides in an inactive form in immature sperm, spermatids, but is likely activated in response to reduced spe-4 and spe-6 function. Upon activation, mediates the release of zinc from internal stores in spermatids into the cytoplasm. The resulting increase in cytoplasmic zinc levels promotes spermatid activation and subsequent differentiation into mature motile sperm that are capable of fertilization. This chain is Zinc transporter zipt-7.1, found in Caenorhabditis briggsae.